Consider the following 325-residue polypeptide: Endo-1,4-beta-xylanase 2 (325 aa).

Positions 1–18 (MLYTSIFAAAMAASGAMA) are cleaved as a signal peptide. The 300-residue stretch at 26-325 (ASNCTTLDSF…KAAVKAIMAI (300 aa)) folds into the GH10 domain. Residue Asn28 is glycosylated (N-linked (GlcNAc...) asparagine). The active-site Proton donor is the Glu157. The active-site Nucleophile is Glu262. Cys280 and Cys286 are oxidised to a cystine.

It belongs to the glycosyl hydrolase 10 (cellulase F) family.

The protein localises to the secreted. It catalyses the reaction Endohydrolysis of (1-&gt;4)-beta-D-xylosidic linkages in xylans.. It functions in the pathway glycan degradation; xylan degradation. Endo-1,4-beta-xylanase involved in the hydrolysis of xylan, a major structural heterogeneous polysaccharide found in plant biomass representing the second most abundant polysaccharide in the biosphere, after cellulose. The polypeptide is Endo-1,4-beta-xylanase 2 (xyl2) (Claviceps purpurea (Ergot fungus)).